A 136-amino-acid chain; its full sequence is uncharacterized protein (136 aa).

4 helical membrane passes run 10-32, 44-66, 70-89, and 102-124; these read SAGI…FIWI, LRCG…ILHF, VLLL…KTLL, and IAGV…WLLF.

The protein resides in the cell membrane. This is an uncharacterized protein from Archaeoglobus fulgidus (strain ATCC 49558 / DSM 4304 / JCM 9628 / NBRC 100126 / VC-16).